A 411-amino-acid chain; its full sequence is Protein translocase subunit SecY (411 aa).

Helical transmembrane passes span 11 to 31 (IIFTLFLLVLARLGIFIPVPG), 52 to 72 (IFSGGGFSTIGIFALGIVPYI), 111 to 131 (ALGWATLQSGAISIWVKPYVF), 135 to 155 (FAFVCESVLALTAGSMIIMWL), 163 to 180 (GIGNGASLLIFQNIVSGL), 197 to 217 (SLKFGLFIAIFLLMIIITICV), 253 to 273 (VMPIVFASASMALPSYLTQII), 291 to 311 (LYLLLYCALILFFSYFYTSIV), 349 to 369 (TFLGASFLFTVALIPFIIEKV), and 377 to 397 (GLGATSLLILVGVAIDTAKQI).

Belongs to the SecY/SEC61-alpha family. In terms of assembly, component of the plastid Sec protein translocase complex, which is composed of at least SecY, SecE and SecG.

Its subcellular location is the plastid. The protein localises to the chloroplast thylakoid membrane. Its function is as follows. The central subunit of the protein translocation channel SecYE. Consists of two halves formed by TMs 1-5 and 6-10. These two domains form a lateral gate at the front which open onto the bilayer between TMs 2 and 7, and are clamped together by SecE at the back. The channel is closed by both a pore ring composed of hydrophobic SecY resides and a short helix (helix 2A) on the extracellular side of the membrane which forms a plug. The protein is Protein translocase subunit SecY of Pyropia yezoensis (Susabi-nori).